We begin with the raw amino-acid sequence, 506 residues long: AMP phosphorylase (506 aa).

Residues glycine 168, 194-199 (SRAITG), and threonine 203 each bind AMP. Catalysis depends on aspartate 256, which acts as the Proton donor. AMP is bound by residues serine 264 and lysine 288.

The protein belongs to the thymidine/pyrimidine-nucleoside phosphorylase family. Type 2 subfamily.

The catalysed reaction is AMP + phosphate = alpha-D-ribose 1,5-bisphosphate + adenine. It catalyses the reaction CMP + phosphate = cytosine + alpha-D-ribose 1,5-bisphosphate. It carries out the reaction UMP + phosphate = alpha-D-ribose 1,5-bisphosphate + uracil. Its function is as follows. Catalyzes the conversion of AMP and phosphate to adenine and ribose 1,5-bisphosphate (R15P). Exhibits phosphorylase activity toward CMP and UMP in addition to AMP. Functions in an archaeal AMP degradation pathway, together with R15P isomerase and RubisCO. This chain is AMP phosphorylase, found in Methanococcoides burtonii (strain DSM 6242 / NBRC 107633 / OCM 468 / ACE-M).